Reading from the N-terminus, the 89-residue chain is Small ribosomal subunit protein uS15 (89 aa).

This sequence belongs to the universal ribosomal protein uS15 family. Part of the 30S ribosomal subunit. Forms a bridge to the 50S subunit in the 70S ribosome, contacting the 23S rRNA.

One of the primary rRNA binding proteins, it binds directly to 16S rRNA where it helps nucleate assembly of the platform of the 30S subunit by binding and bridging several RNA helices of the 16S rRNA. In terms of biological role, forms an intersubunit bridge (bridge B4) with the 23S rRNA of the 50S subunit in the ribosome. This is Small ribosomal subunit protein uS15 from Serratia proteamaculans (strain 568).